A 433-amino-acid polypeptide reads, in one-letter code: Ornithine decarboxylase 1B, chloroplastic (433 aa).

Lys-96 bears the N6-(pyridoxal phosphate)lysine mark. Pyridoxal 5'-phosphate contacts are provided by residues Ser-228, Gly-266, and Glu-299–Arg-302. Tyr-342–Asp-343 lines the substrate pocket. Catalysis depends on Cys-378, which acts as the Proton donor; shared with dimeric partner. Residue Asp-379 coordinates substrate. Tyr-407 lines the pyridoxal 5'-phosphate pocket.

This sequence belongs to the Orn/Lys/Arg decarboxylase class-II family. Homodimer. Only the dimer is catalytically active, as the active sites are constructed of residues from both monomers. Pyridoxal 5'-phosphate is required as a cofactor.

It localises to the plastid. The protein resides in the chloroplast. The catalysed reaction is L-ornithine + H(+) = putrescine + CO2. Its pathway is alkaloid biosynthesis; nicotine biosynthesis. The protein operates within amine and polyamine biosynthesis; putrescine biosynthesis via L-ornithine pathway; putrescine from L-ornithine: step 1/1. Functionally, involved in the biosynthesis of pyridine alkaloid natural products, leading mainly to the production of anabasine, anatabine, nicotine and nornicotine, effective deterrents against herbivores with antiparasitic and pesticide properties (neurotoxins); nornicotine serves as the precursor in the synthesis of the carcinogen compound N'-nitrosonornicotine (NNN). Catalyzes the first and rate-limiting step of polyamine biosynthesis that converts ornithine into putrescine, which is the precursor for the polyamines, spermidine and spermine. Polyamines are essential for cell proliferation and are implicated in cellular processes, ranging from DNA replication to apoptosis. The sequence is that of Ornithine decarboxylase 1B, chloroplastic from Nicotiana tabacum (Common tobacco).